Here is a 200-residue protein sequence, read N- to C-terminus: Dephospho-CoA kinase (200 aa).

Residues 4–200 enclose the DPCK domain; that stretch reads TIGLTGSVAT…TFIERFVKNK (197 aa). ATP is bound at residue 12 to 17; sequence ATGKST.

The protein belongs to the CoaE family.

The protein resides in the cytoplasm. It catalyses the reaction 3'-dephospho-CoA + ATP = ADP + CoA + H(+). Its pathway is cofactor biosynthesis; coenzyme A biosynthesis; CoA from (R)-pantothenate: step 5/5. In terms of biological role, catalyzes the phosphorylation of the 3'-hydroxyl group of dephosphocoenzyme A to form coenzyme A. This Listeria monocytogenes serovar 1/2a (strain ATCC BAA-679 / EGD-e) protein is Dephospho-CoA kinase.